The chain runs to 70 residues: Cytochrome c oxidase subunit 8B, mitochondrial (70 aa).

The transit peptide at Met-1–Arg-24 directs the protein to the mitochondrion. Residues Ile-25 to Ser-35 are Mitochondrial matrix-facing. The helical transmembrane segment at Ala-36–Ser-59 threads the bilayer. Over His-60–Ala-70 the chain is Mitochondrial intermembrane.

Belongs to the cytochrome c oxidase VIII family. As to quaternary structure, component of the cytochrome c oxidase (complex IV, CIV), a multisubunit enzyme composed of 14 subunits. The complex is composed of a catalytic core of 3 subunits MT-CO1, MT-CO2 and MT-CO3, encoded in the mitochondrial DNA, and 11 supernumerary subunits COX4I, COX5A, COX5B, COX6A, COX6B, COX6C, COX7A, COX7B, COX7C, COX8 and NDUFA4, which are encoded in the nuclear genome. The complex exists as a monomer or a dimer and forms supercomplexes (SCs) in the inner mitochondrial membrane with NADH-ubiquinone oxidoreductase (complex I, CI) and ubiquinol-cytochrome c oxidoreductase (cytochrome b-c1 complex, complex III, CIII), resulting in different assemblies (supercomplex SCI(1)III(2)IV(1) and megacomplex MCI(2)III(2)IV(2)).

The protein resides in the mitochondrion inner membrane. It participates in energy metabolism; oxidative phosphorylation. In terms of biological role, component of the cytochrome c oxidase, the last enzyme in the mitochondrial electron transport chain which drives oxidative phosphorylation. The respiratory chain contains 3 multisubunit complexes succinate dehydrogenase (complex II, CII), ubiquinol-cytochrome c oxidoreductase (cytochrome b-c1 complex, complex III, CIII) and cytochrome c oxidase (complex IV, CIV), that cooperate to transfer electrons derived from NADH and succinate to molecular oxygen, creating an electrochemical gradient over the inner membrane that drives transmembrane transport and the ATP synthase. Cytochrome c oxidase is the component of the respiratory chain that catalyzes the reduction of oxygen to water. Electrons originating from reduced cytochrome c in the intermembrane space (IMS) are transferred via the dinuclear copper A center (CU(A)) of subunit 2 and heme A of subunit 1 to the active site in subunit 1, a binuclear center (BNC) formed by heme A3 and copper B (CU(B)). The BNC reduces molecular oxygen to 2 water molecules using 4 electrons from cytochrome c in the IMS and 4 protons from the mitochondrial matrix. This chain is Cytochrome c oxidase subunit 8B, mitochondrial (Cox8b), found in Rattus norvegicus (Rat).